Reading from the N-terminus, the 969-residue chain is Leucine--tRNA ligase (969 aa).

Positions 78–89 (PYPSGEGLHVGH) match the 'HIGH' region motif. The short motif at 739-743 (KIGKS) is the 'KMSKS' region element. Lys742 is an ATP binding site.

Belongs to the class-I aminoacyl-tRNA synthetase family.

It is found in the cytoplasm. It catalyses the reaction tRNA(Leu) + L-leucine + ATP = L-leucyl-tRNA(Leu) + AMP + diphosphate. The sequence is that of Leucine--tRNA ligase from Mycobacterium tuberculosis (strain ATCC 25177 / H37Ra).